A 458-amino-acid polypeptide reads, in one-letter code: Chromosomal replication initiator protein DnaA (458 aa).

The domain I, interacts with DnaA modulators stretch occupies residues 1-93 (MKTELSEVWQ…NVIEDPAAEP (93 aa)). Residues 94-119 (VDAPNVADLPAGTSAPAAEQNARLLG) are domain II. The domain III, AAA+ region stretch occupies residues 120-336 (YINPKYTFET…GALTRVVAYA (217 aa)). The ATP site is built by Gly164, Gly166, Lys167, and Thr168. The segment at 337 to 458 (NMLKCPLTYD…EQLIARIRAE (122 aa)) is domain IV, binds dsDNA.

The protein belongs to the DnaA family. As to quaternary structure, oligomerizes as a right-handed, spiral filament on DNA at oriC.

The protein resides in the cytoplasm. Functionally, plays an essential role in the initiation and regulation of chromosomal replication. ATP-DnaA binds to the origin of replication (oriC) to initiate formation of the DNA replication initiation complex once per cell cycle. Binds the DnaA box (a 9 base pair repeat at the origin) and separates the double-stranded (ds)DNA. Forms a right-handed helical filament on oriC DNA; dsDNA binds to the exterior of the filament while single-stranded (ss)DNA is stabiized in the filament's interior. The ATP-DnaA-oriC complex binds and stabilizes one strand of the AT-rich DNA unwinding element (DUE), permitting loading of DNA polymerase. After initiation quickly degrades to an ADP-DnaA complex that is not apt for DNA replication. Binds acidic phospholipids. This Symbiobacterium thermophilum (strain DSM 24528 / JCM 14929 / IAM 14863 / T) protein is Chromosomal replication initiator protein DnaA.